The chain runs to 558 residues: Arginine--tRNA ligase (558 aa).

A 'HIGH' region motif is present at residues A119–H129.

Belongs to the class-I aminoacyl-tRNA synthetase family.

It is found in the cytoplasm. It catalyses the reaction tRNA(Arg) + L-arginine + ATP = L-arginyl-tRNA(Arg) + AMP + diphosphate. The polypeptide is Arginine--tRNA ligase (Methanothrix thermoacetophila (strain DSM 6194 / JCM 14653 / NBRC 101360 / PT) (Methanosaeta thermophila)).